The sequence spans 221 residues: MAASRPLSRFWEWGKNIVCVGRNYADHVREMRSAVLSEPVLFLKPSTAYAPEGSPILMPAYTRNLHHELELGVVMGKRCRAVPEAAAMDYVGGYALCLDMTARDVQDECKKKGLPWTLAKSFTASCPVSAFVPKEKIPDPHKLKLWLKVNGELRQEGETSSMIFSIPYIISYVSKIITLEEGDIILTGTPKGVGPVKENDEIEAGIHGLVSMTFKVEKPEY.

A mitochondrion-targeting transit peptide spans methionine 1 to tyrosine 24. Arginine 22 is a binding site for oxalate. Serine 37 carries the phosphoserine modification. Residues glutamate 68, glutamate 70, and aspartate 99 each coordinate Mg(2+). Lysine 110 is subject to N6-acetyllysine. The residue at position 112 (lysine 112) is an N6-succinyllysine. Oxalate-binding residues include lysine 120 and threonine 189.

It belongs to the FAH family. In terms of assembly, homodimer. Mg(2+) is required as a cofactor. Requires Mn(2+) as cofactor. Ubiquitous (at protein level).

It is found in the mitochondrion. Its subcellular location is the cytoplasm. The protein localises to the cytosol. The catalysed reaction is oxaloacetate = enol-oxaloacetate. The enzyme catalyses oxaloacetate + H(+) = pyruvate + CO2. It carries out the reaction a 3-acylpyruvate + H2O = a carboxylate + pyruvate + H(+). It catalyses the reaction acetylpyruvate + H2O = acetate + pyruvate + H(+). The catalysed reaction is 3-fumarylpyruvate + H2O = fumarate + pyruvate + H(+). Its activity is regulated as follows. Oxaloacetate decarboxylation is competitively inhibited by oxalate. Tautomerase that converts enol-oxaloacetate, a strong inhibitor of succinate dehydrogenase, to the physiological keto form of oxaloacetate. It is thereby required to maximize aerobic respiration efficiency by preventing succinate dehydrogenase inhibition. Also acts as a weak oxaloacetate decarboxylase (ODx), catalyzing the decarboxylation of oxaloacetate (OAA) to pyruvate and CO(2), and as such is likely a regulatory enzyme in the TCA cycle. Also displays acylpyruvase activity, being able to hydrolyze acetylpyruvate and fumarylpyruvate in vitro. Exhibits only a weak hydrolase activity on methylacetopyruvate and acetylacetone, and no activity toward acetoacetyl-CoA. The sequence is that of Oxaloacetate tautomerase FAHD1, mitochondrial from Homo sapiens (Human).